The following is a 465-amino-acid chain: Cysteine--tRNA ligase (465 aa).

Residue Cys27 coordinates Zn(2+). A 'HIGH' region motif is present at residues 29 to 39; the sequence is PTVYNFFHIGN. Zn(2+)-binding residues include Cys207, His232, and Glu236. Residues 264-268 carry the 'KMSKS' region motif; the sequence is KMSKS. Lys267 contributes to the ATP binding site.

It belongs to the class-I aminoacyl-tRNA synthetase family. As to quaternary structure, monomer. Zn(2+) serves as cofactor.

The protein resides in the cytoplasm. The enzyme catalyses tRNA(Cys) + L-cysteine + ATP = L-cysteinyl-tRNA(Cys) + AMP + diphosphate. This is Cysteine--tRNA ligase from Clostridium kluyveri (strain NBRC 12016).